We begin with the raw amino-acid sequence, 224 residues long: Cytidylate kinase (224 aa).

11-19 (GPAAAGKST) provides a ligand contact to ATP.

Belongs to the cytidylate kinase family. Type 1 subfamily.

The protein localises to the cytoplasm. The enzyme catalyses CMP + ATP = CDP + ADP. The catalysed reaction is dCMP + ATP = dCDP + ADP. This chain is Cytidylate kinase, found in Listeria welshimeri serovar 6b (strain ATCC 35897 / DSM 20650 / CCUG 15529 / CIP 8149 / NCTC 11857 / SLCC 5334 / V8).